We begin with the raw amino-acid sequence, 358 residues long: Putative zinc metalloprotease RC0203 (358 aa).

H18 is a Zn(2+) binding site. The active site involves E19. Position 22 (H22) interacts with Zn(2+). Helical transmembrane passes span 52–71, 97–119, 285–307, and 332–351; these read GVRW…IYGY, FLIV…AGFY, YLLF…IPVL, and ILLQ…AVSN. A PDZ domain is found at 102–186; sequence AGPLINYLLA…STLTIERKSE (85 aa).

This sequence belongs to the peptidase M50B family. Requires Zn(2+) as cofactor.

The protein resides in the cell inner membrane. This chain is Putative zinc metalloprotease RC0203, found in Rickettsia conorii (strain ATCC VR-613 / Malish 7).